We begin with the raw amino-acid sequence, 731 residues long: Dynein axonemal intermediate chain 7 (731 aa).

Disordered regions lie at residues 1-50 (MPPK…NERL) and 285-320 (QNTE…VRSE). Basic and acidic residues-rich tracts occupy residues 17–50 (KAEK…NERL) and 296–320 (GKME…VRSE).

This sequence belongs to the DNAI7 family. As to quaternary structure, part of the multisubunit axonemal dynein complex formed at least of two heavy chains and a number of intermediate and light chains.

The protein resides in the cell projection. It is found in the cilium. Its subcellular location is the cytoplasm. Its function is as follows. Via its association with the multisubunit axonemal dynein complex, may be potentially involved in the regulation of cilia function. The chain is Dynein axonemal intermediate chain 7 (dnai7) from Danio rerio (Zebrafish).